The primary structure comprises 971 residues: uncharacterized protein (971 aa).

This is an uncharacterized protein from Caenorhabditis elegans.